A 302-amino-acid chain; its full sequence is Succinate--CoA ligase [ADP-forming] subunit alpha (302 aa).

CoA contacts are provided by residues 17 to 20, Lys43, and 96 to 98; these read TGST and ITE. Tyr159 is a binding site for substrate. The Tele-phosphohistidine intermediate role is filled by His247.

The protein belongs to the succinate/malate CoA ligase alpha subunit family. As to quaternary structure, heterotetramer of two alpha and two beta subunits.

The enzyme catalyses succinate + ATP + CoA = succinyl-CoA + ADP + phosphate. The catalysed reaction is GTP + succinate + CoA = succinyl-CoA + GDP + phosphate. It participates in carbohydrate metabolism; tricarboxylic acid cycle; succinate from succinyl-CoA (ligase route): step 1/1. In terms of biological role, succinyl-CoA synthetase functions in the citric acid cycle (TCA), coupling the hydrolysis of succinyl-CoA to the synthesis of either ATP or GTP and thus represents the only step of substrate-level phosphorylation in the TCA. The alpha subunit of the enzyme binds the substrates coenzyme A and phosphate, while succinate binding and nucleotide specificity is provided by the beta subunit. The protein is Succinate--CoA ligase [ADP-forming] subunit alpha of Staphylococcus aureus (strain COL).